The primary structure comprises 457 residues: Reticulophagy regulator 3 (457 aa).

A disordered region spans residues 1 to 24; that stretch reads MAQRVGEEEQGASGLRRRRSGARC. 3 helical membrane-spanning segments follow: residues 80-100, 165-185, and 186-206; these read FFAL…MIII, PGKF…LGGY, and IPGV…PLAI. Polar residues predominate over residues 291–305; that stretch reads ENGTFNLSRGQTPLT. Disordered stretches follow at residues 291–351 and 410–457; these read ENGT…IPST and AYAE…HSHQ. Positions 310–326 are enriched in basic and acidic residues; the sequence is DLDRHSDPEESFARDLP. The segment covering 428–441 has biased composition (acidic residues); the sequence is LDTDAEADDFELLD. Positions 435–440 match the LIR motif motif; the sequence is DDFELL. Residues 443–457 show a composition bias toward polar residues; the sequence is SELSQMDPSSSHSHQ.

It belongs to the RETREG family. As to quaternary structure, interacts with ATG8 family modifier proteins.

Its subcellular location is the endoplasmic reticulum membrane. Endoplasmic reticulum (ER)-anchored autophagy regulator which exists in an inactive state under basal conditions but is activated following cellular stress. When activated, induces ER fragmentation and mediates ER delivery into lysosomes through sequestration into autophagosomes via interaction with ATG8 family proteins. Promotes ER membrane curvature and ER tubulation required for subsequent ER fragmentation and engulfment into autophagosomes. This Xenopus tropicalis (Western clawed frog) protein is Reticulophagy regulator 3 (retreg3).